The sequence spans 220 residues: ATP-dependent Clp protease proteolytic subunit (220 aa).

Catalysis depends on Ser-125, which acts as the Nucleophile. Residue His-150 is part of the active site.

Belongs to the peptidase S14 family. In terms of assembly, fourteen ClpP subunits assemble into 2 heptameric rings which stack back to back to give a disk-like structure with a central cavity, resembling the structure of eukaryotic proteasomes.

It localises to the cytoplasm. It carries out the reaction Hydrolysis of proteins to small peptides in the presence of ATP and magnesium. alpha-casein is the usual test substrate. In the absence of ATP, only oligopeptides shorter than five residues are hydrolyzed (such as succinyl-Leu-Tyr-|-NHMec, and Leu-Tyr-Leu-|-Tyr-Trp, in which cleavage of the -Tyr-|-Leu- and -Tyr-|-Trp bonds also occurs).. In terms of biological role, cleaves peptides in various proteins in a process that requires ATP hydrolysis. Has a chymotrypsin-like activity. Plays a major role in the degradation of misfolded proteins. The chain is ATP-dependent Clp protease proteolytic subunit from Bacteroides thetaiotaomicron (strain ATCC 29148 / DSM 2079 / JCM 5827 / CCUG 10774 / NCTC 10582 / VPI-5482 / E50).